Here is a 163-residue protein sequence, read N- to C-terminus: Protein-export protein SecB (163 aa).

It belongs to the SecB family. In terms of assembly, homotetramer, a dimer of dimers. One homotetramer interacts with 1 SecA dimer.

Its subcellular location is the cytoplasm. Its function is as follows. One of the proteins required for the normal export of preproteins out of the cell cytoplasm. It is a molecular chaperone that binds to a subset of precursor proteins, maintaining them in a translocation-competent state. It also specifically binds to its receptor SecA. In Caulobacter vibrioides (strain ATCC 19089 / CIP 103742 / CB 15) (Caulobacter crescentus), this protein is Protein-export protein SecB.